A 265-amino-acid chain; its full sequence is Phosphatidylglycerol--prolipoprotein diacylglyceryl transferase (265 aa).

Helical transmembrane passes span 17–37 (LAIRWYGLMYLAAFAQFIWLA), 59–79 (MLFYGVLGVIIGGRLGEVLFY), 94–114 (VWKGGMSFHGGFLGVLLAMSI), 123–143 (VLDVWDFIAPMVPLGYAFGRL), 177–197 (SPLYQALVDGLLMFILLWLFA), 204–224 (MAVGGMFALLYGSARFFTEYF), and 238–258 (ISAGQMLSVPLIVLGIVMLLI). Arg-142 serves as a coordination point for a 1,2-diacyl-sn-glycero-3-phospho-(1'-sn-glycerol).

This sequence belongs to the Lgt family.

It localises to the cell inner membrane. The catalysed reaction is L-cysteinyl-[prolipoprotein] + a 1,2-diacyl-sn-glycero-3-phospho-(1'-sn-glycerol) = an S-1,2-diacyl-sn-glyceryl-L-cysteinyl-[prolipoprotein] + sn-glycerol 1-phosphate + H(+). It participates in protein modification; lipoprotein biosynthesis (diacylglyceryl transfer). Its function is as follows. Catalyzes the transfer of the diacylglyceryl group from phosphatidylglycerol to the sulfhydryl group of the N-terminal cysteine of a prolipoprotein, the first step in the formation of mature lipoproteins. In Janthinobacterium sp. (strain Marseille) (Minibacterium massiliensis), this protein is Phosphatidylglycerol--prolipoprotein diacylglyceryl transferase.